The sequence spans 1447 residues: Sister chromatid cohesion protein PDS5 homolog B (1447 aa).

The stretch at 383–419 (LLVNDHLLNFVRERTLDKRWRVRKEAMMGLAQIYKKY) is one HEAT repeat. The interval 1117-1447 (KSFFTPGKPK…RRRSAKRERR (331 aa)) is disordered. The residue at position 1136 (Lys-1136) is an N6-acetyllysine. The span at 1137 to 1155 (PLSSAGKQSQTKSSRMETV) shows a compositional bias: polar residues. 6 positions are modified to phosphoserine: Ser-1140, Ser-1162, Ser-1166, Ser-1176, Ser-1182, and Ser-1191. A compositionally biased stretch (low complexity) spans 1156–1167 (SNASSSSNPSSP). Positions 1172–1184 (GRLDSSEMDHSEN) are enriched in basic and acidic residues. Composition is skewed to basic and acidic residues over residues 1196-1214 (KKSDKRDDSDLVRSELEKP) and 1225-1243 (QEEKLGMDDLTKLVQEQKP). Residues 1245 to 1254 (GSQRSRKRGH) are compositionally biased toward basic residues. A DNA-binding region (a.T hook 1) is located at residues 1249 to 1261 (SRKRGHTASESDE). Thr-1255 carries the phosphothreonine modification. Phosphoserine occurs at positions 1257 and 1259. Residues 1265–1274 (PEEKRLKEDI) show a composition bias toward basic and acidic residues. Residue Ser-1283 is modified to Phosphoserine. The segment at residues 1287–1299 (KGKRGRPPKPLGG) is a DNA-binding region (a.T hook 2). The span at 1310–1319 (TSKKGSKKKS) shows a compositional bias: basic residues. Ser-1319 and Ser-1334 each carry phosphoserine. Over residues 1342–1353 (KSKQHRVSRRAQ) the composition is skewed to basic residues. A compositionally biased stretch (polar residues) spans 1355-1372 (RAESPESSAIESTQSTPQ). Ser-1358 and Ser-1366 each carry phosphoserine. At Thr-1367 the chain carries Phosphothreonine. Phosphoserine is present on Ser-1369. Phosphothreonine is present on residues Thr-1370 and Thr-1381. Positions 1372–1384 (QKGRGRPSKTPSP) form a DNA-binding region, a.T hook 3. Low complexity predominate over residues 1379–1388 (SKTPSPSQPK). 2 positions are modified to phosphoserine: Ser-1383 and Ser-1417. A compositionally biased stretch (acidic residues) spans 1422-1432 (IPQEETEEEEV). A compositionally biased stretch (basic residues) spans 1437-1447 (VRRRSAKRERR).

It belongs to the PDS5 family. Interacts with the cohesin complex. Interacts with RAD21; the interaction is direct. Interacts with WAPL (via FGF motifs) or CDCA5 (via the FGF motif); the interaction is direct, cohesin-dependent and competitive. Widely expressed.

It localises to the nucleus. Its function is as follows. Regulator of sister chromatid cohesion in mitosis which may stabilize cohesin complex association with chromatin. May couple sister chromatid cohesion during mitosis to DNA replication. Cohesion ensures that chromosome partitioning is accurate in both meiotic and mitotic cells and plays an important role in DNA repair. Plays a role in androgen-induced proliferative arrest in prostate cells. The protein is Sister chromatid cohesion protein PDS5 homolog B (PDS5B) of Homo sapiens (Human).